The sequence spans 650 residues: MSTQSLYKVPSEIAANALVNDEQYKKMYQESIVNPEGFWREHGNRIDWIKPFTKVKKTSFDDHNLFIKWFYDGTLNASANCLDRHLENNADKLAIIWEGDDAKDQRTLTYGQLHTQVCKFANALRSQGVRRGDVVTIYMPMVPEAAVAMLACARIGAIHSVVFGGFSPDSIASRVIDGNSKVVITADEGVRAGRIIPLKANIDEALSHPDVNCVEKVIVMKRTGGDINWVEGRDIWWDSLMDTASEHCIAEEMGAEDPLFLLYTSGSTGNPKGVLHTTGGYMVYAAMTHEYVFDYKENEVYWCTADVGWITGHSYMVYGPLANGATVLIHEGVPNYPSPARLGEMVDRHKVNILYTAPTLIRALMAEGKEQFAGFDGSSLRIMGSVGEPINPEAWRWYNDVIGHEKCPIVDTWWQTETGGILISPLPGATDTKPGSATRPFFGVQPALVDNMGNIVDGASEGNLVILDSWPGQMRTVFGDHDRFVLTYFKTFRGMYFTGDGAKRDEDGYYWITGRVDDVINVSGHRLGTAEVESALVAHEFVAEAAVVGYPHDIKGQGIYAYVTLTKGSVETEELRQELRQWVRKEIGALATPDLIQWAGGLPKTRSGKIMRRFLRKIAANEVSNLGDSSTLADPAVIDTLIETRLNRSE.

CoA is bound by residues 191–194, Thr311, and Asn335; that span reads RAGR. ATP contacts are provided by residues 387 to 389, 411 to 416, Asp500, and Arg515; these read GEP and DTWWQT. Ser523 contributes to the CoA binding site. Arg526 lines the ATP pocket. Residues Val537, His539, and Val542 each coordinate Mg(2+). Arg584 contacts CoA. Residue Lys609 is modified to N6-acetyllysine.

Belongs to the ATP-dependent AMP-binding enzyme family. Requires Mg(2+) as cofactor. In terms of processing, acetylated. Deacetylation by the SIR2-homolog deacetylase activates the enzyme.

It catalyses the reaction acetate + ATP + CoA = acetyl-CoA + AMP + diphosphate. In terms of biological role, catalyzes the conversion of acetate into acetyl-CoA (AcCoA), an essential intermediate at the junction of anabolic and catabolic pathways. AcsA undergoes a two-step reaction. In the first half reaction, AcsA combines acetate with ATP to form acetyl-adenylate (AcAMP) intermediate. In the second half reaction, it can then transfer the acetyl group from AcAMP to the sulfhydryl group of CoA, forming the product AcCoA. This Shewanella halifaxensis (strain HAW-EB4) protein is Acetyl-coenzyme A synthetase.